Reading from the N-terminus, the 384-residue chain is Centrosomal protein of 44 kDa (384 aa).

Residues 11–188 are binds with microtubules and centrioles; the sequence is RKLEQRLRTL…TKCYSSALVE (178 aa). The disordered stretch occupies residues 191 to 222; it reads EEEEPTSDSEGGSHLEHEMESPFETAETTPNS. Residues 201–210 are compositionally biased toward basic and acidic residues; that stretch reads GGSHLEHEME. Coiled-coil stretches lie at residues 221–260 and 353–378; these read NSEQIELLRKQLAECQEKLQRLDCVEQRLQSLETSMKGKI and TEDSNETTKQRMERITKMMEETSKLL.

As to quaternary structure, binds to centriolar microtubules.

It is found in the cytoplasm. Its subcellular location is the cytoskeleton. The protein localises to the microtubule organizing center. It localises to the centrosome. The protein resides in the centriole. It is found in the spindle pole. Its subcellular location is the midbody. In terms of biological role, centriole-enriched microtubule-binding protein involved in centriole biogenesis. In collaboration with CEP295 and POC1B, is required for the centriole-to-centrosome conversion by ensuring the formation of bona fide centriole wall. Functions as a linker component that maintains centrosome cohesion. Associates with CROCC and regulates its stability and localization to the centrosome. In Xenopus laevis (African clawed frog), this protein is Centrosomal protein of 44 kDa (cep44).